Consider the following 392-residue polypeptide: Proteasome-activating nucleotidase (392 aa).

The stretch at 19–53 forms a coiled coil; sequence IVRLLEEKIESLTKELEKLRQDLNWYKGELEKLLA. Residues 178–183 and tyrosine 317 contribute to the ATP site; that span reads GTGKTL. Residues 390–392 form a docks into pockets in the proteasome alpha-ring to cause gate opening region; the sequence is KYV.

It belongs to the AAA ATPase family. Homohexamer. The hexameric complex has a two-ring architecture resembling a top hat that caps the 20S proteasome core at one or both ends. Upon ATP-binding, the C-terminus of PAN interacts with the alpha-rings of the proteasome core by binding to the intersubunit pockets.

The protein resides in the cytoplasm. ATPase which is responsible for recognizing, binding, unfolding and translocation of substrate proteins into the archaeal 20S proteasome core particle. Is essential for opening the gate of the 20S proteasome via an interaction with its C-terminus, thereby allowing substrate entry and access to the site of proteolysis. Thus, the C-termini of the proteasomal ATPase function like a 'key in a lock' to induce gate opening and therefore regulate proteolysis. Unfolding activity requires energy from ATP hydrolysis, whereas ATP binding alone promotes ATPase-20S proteasome association which triggers gate opening, and supports translocation of unfolded substrates. The polypeptide is Proteasome-activating nucleotidase (Sulfurisphaera tokodaii (strain DSM 16993 / JCM 10545 / NBRC 100140 / 7) (Sulfolobus tokodaii)).